The sequence spans 404 residues: Riboflavin biosynthesis protein RibBA (404 aa).

A DHBP synthase region spans residues 1 to 204 (MEELKLNTIE…IRDLIAYRLK (204 aa)). D-ribulose 5-phosphate contacts are provided by residues 30–31 (RE), aspartate 35, 143–147 (RAGHT), and glutamate 167. Position 31 (glutamate 31) interacts with Mg(2+). Histidine 146 contacts Mg(2+). Residues 205-404 (QESLVEKGVE…RMGHTLHFNK (200 aa)) are GTP cyclohydrolase II. Residue 255 to 259 (RVHSS) participates in GTP binding. The Zn(2+) site is built by cysteine 260, cysteine 271, and cysteine 273. Residues glutamine 276, 298 to 300 (EGR), and threonine 320 contribute to the GTP site. The active-site Proton acceptor; for GTP cyclohydrolase activity is aspartate 332. Arginine 334 acts as the Nucleophile; for GTP cyclohydrolase activity in catalysis. Residues threonine 355 and lysine 360 each coordinate GTP.

In the N-terminal section; belongs to the DHBP synthase family. It in the C-terminal section; belongs to the GTP cyclohydrolase II family. The cofactor is Mg(2+). Requires Mn(2+) as cofactor. It depends on Zn(2+) as a cofactor.

It carries out the reaction D-ribulose 5-phosphate = (2S)-2-hydroxy-3-oxobutyl phosphate + formate + H(+). It catalyses the reaction GTP + 4 H2O = 2,5-diamino-6-hydroxy-4-(5-phosphoribosylamino)-pyrimidine + formate + 2 phosphate + 3 H(+). The protein operates within cofactor biosynthesis; riboflavin biosynthesis; 2-hydroxy-3-oxobutyl phosphate from D-ribulose 5-phosphate: step 1/1. Its pathway is cofactor biosynthesis; riboflavin biosynthesis; 5-amino-6-(D-ribitylamino)uracil from GTP: step 1/4. Its function is as follows. Catalyzes the conversion of D-ribulose 5-phosphate to formate and 3,4-dihydroxy-2-butanone 4-phosphate. Functionally, catalyzes the conversion of GTP to 2,5-diamino-6-ribosylamino-4(3H)-pyrimidinone 5'-phosphate (DARP), formate and pyrophosphate. In Phocaeicola vulgatus (strain ATCC 8482 / DSM 1447 / JCM 5826 / CCUG 4940 / NBRC 14291 / NCTC 11154) (Bacteroides vulgatus), this protein is Riboflavin biosynthesis protein RibBA.